A 327-amino-acid polypeptide reads, in one-letter code: Transaldolase (327 aa).

Lysine 132 (schiff-base intermediate with substrate) is an active-site residue.

It belongs to the transaldolase family. Type 1 subfamily. In terms of assembly, homodimer.

Its subcellular location is the cytoplasm. The enzyme catalyses D-sedoheptulose 7-phosphate + D-glyceraldehyde 3-phosphate = D-erythrose 4-phosphate + beta-D-fructose 6-phosphate. Its pathway is carbohydrate degradation; pentose phosphate pathway; D-glyceraldehyde 3-phosphate and beta-D-fructose 6-phosphate from D-ribose 5-phosphate and D-xylulose 5-phosphate (non-oxidative stage): step 2/3. Transaldolase is important for the balance of metabolites in the pentose-phosphate pathway. In Chlamydia felis (strain Fe/C-56) (Chlamydophila felis), this protein is Transaldolase.